We begin with the raw amino-acid sequence, 548 residues long: Ankyrin repeat domain-containing protein SOWAHA (548 aa).

An N-terminal signal peptide occupies residues 1–19 (MALAAAAAAAAAAAGVSQA). Residues 114–212 (EDNCAPGAPH…PPTAQVPPQK (99 aa)) form a disordered region. Polar residues predominate over residues 136–153 (SAPSELQHTPETLPSEVT). The segment covering 198 to 212 (GPEPAPPTAQVPPQK) has biased composition (pro residues). Ser-258 is modified (phosphoserine). ANK repeat units follow at residues 344 to 373 (SGFT…RGGA) and 383 to 413 (GGYT…QVHV). Positions 512 to 548 (PRKKTKIRGGLPSFTEISHRSTPGPLAGLVPSLPPPT) are disordered.

It belongs to the SOWAH family.

The sequence is that of Ankyrin repeat domain-containing protein SOWAHA (Sowaha) from Mus musculus (Mouse).